A 318-amino-acid chain; its full sequence is Porphobilinogen deaminase (318 aa).

Residue cysteine 241 is modified to S-(dipyrrolylmethanemethyl)cysteine.

It belongs to the HMBS family. In terms of assembly, monomer. It depends on dipyrromethane as a cofactor.

The catalysed reaction is 4 porphobilinogen + H2O = hydroxymethylbilane + 4 NH4(+). It participates in porphyrin-containing compound metabolism; protoporphyrin-IX biosynthesis; coproporphyrinogen-III from 5-aminolevulinate: step 2/4. Functionally, tetrapolymerization of the monopyrrole PBG into the hydroxymethylbilane pre-uroporphyrinogen in several discrete steps. The chain is Porphobilinogen deaminase from Citrifermentans bemidjiense (strain ATCC BAA-1014 / DSM 16622 / JCM 12645 / Bem) (Geobacter bemidjiensis).